The sequence spans 427 residues: 3-phosphoshikimate 1-carboxyvinyltransferase (427 aa).

3 residues coordinate 3-phosphoshikimate: lysine 20, serine 21, and arginine 25. Lysine 20 lines the phosphoenolpyruvate pocket. Phosphoenolpyruvate is bound by residues glycine 90 and arginine 118. The 3-phosphoshikimate site is built by serine 163, serine 164, glutamine 165, serine 191, aspartate 309, and lysine 336. Glutamine 165 contacts phosphoenolpyruvate. Catalysis depends on aspartate 309, which acts as the Proton acceptor. Phosphoenolpyruvate is bound by residues arginine 340 and arginine 381.

This sequence belongs to the EPSP synthase family. As to quaternary structure, monomer.

It localises to the cytoplasm. The enzyme catalyses 3-phosphoshikimate + phosphoenolpyruvate = 5-O-(1-carboxyvinyl)-3-phosphoshikimate + phosphate. Its pathway is metabolic intermediate biosynthesis; chorismate biosynthesis. Functionally, catalyzes the transfer of the enolpyruvyl moiety of phosphoenolpyruvate (PEP) to the 5-hydroxyl of shikimate-3-phosphate (S3P) to produce enolpyruvyl shikimate-3-phosphate and inorganic phosphate. The sequence is that of 3-phosphoshikimate 1-carboxyvinyltransferase from Methanococcoides burtonii (strain DSM 6242 / NBRC 107633 / OCM 468 / ACE-M).